Consider the following 373-residue polypeptide: Glutamate 5-kinase 2 (373 aa).

Residue K11 participates in ATP binding. Positions 51, 138, and 150 each coordinate substrate. ATP is bound by residues 170–171 (SD) and 212–218 (TGGMKSK). In terms of domain architecture, PUA spans 279-355 (EGDIVVHNES…TNQETAASSQ (77 aa)).

Belongs to the glutamate 5-kinase family.

The protein resides in the cytoplasm. The enzyme catalyses L-glutamate + ATP = L-glutamyl 5-phosphate + ADP. Its pathway is amino-acid biosynthesis; L-proline biosynthesis; L-glutamate 5-semialdehyde from L-glutamate: step 1/2. In terms of biological role, catalyzes the transfer of a phosphate group to glutamate to form L-glutamate 5-phosphate. In Bacillus licheniformis (strain ATCC 14580 / DSM 13 / JCM 2505 / CCUG 7422 / NBRC 12200 / NCIMB 9375 / NCTC 10341 / NRRL NRS-1264 / Gibson 46), this protein is Glutamate 5-kinase 2.